A 144-amino-acid polypeptide reads, in one-letter code: Large ribosomal subunit protein uL14 (144 aa).

Belongs to the universal ribosomal protein uL14 family. As to quaternary structure, part of the 50S ribosomal subunit. Forms a cluster with proteins L3 and L24e, part of which may contact the 16S rRNA in 2 intersubunit bridges.

Functionally, binds to 23S rRNA. Forms part of two intersubunit bridges in the 70S ribosome. This is Large ribosomal subunit protein uL14 from Pyrobaculum islandicum (strain DSM 4184 / JCM 9189 / GEO3).